A 388-amino-acid polypeptide reads, in one-letter code: Chorismate synthase (388 aa).

Residues R39 and R45 each contribute to the NADP(+) site. FMN contacts are provided by residues 130-132 (RSS), 251-252 (NA), G296, 311-315 (KPIPT), and R337.

It belongs to the chorismate synthase family. In terms of assembly, homotetramer. FMNH2 serves as cofactor.

It carries out the reaction 5-O-(1-carboxyvinyl)-3-phosphoshikimate = chorismate + phosphate. Its pathway is metabolic intermediate biosynthesis; chorismate biosynthesis; chorismate from D-erythrose 4-phosphate and phosphoenolpyruvate: step 7/7. Its function is as follows. Catalyzes the anti-1,4-elimination of the C-3 phosphate and the C-6 proR hydrogen from 5-enolpyruvylshikimate-3-phosphate (EPSP) to yield chorismate, which is the branch point compound that serves as the starting substrate for the three terminal pathways of aromatic amino acid biosynthesis. This reaction introduces a second double bond into the aromatic ring system. This chain is Chorismate synthase, found in Streptococcus pyogenes serotype M3 (strain SSI-1).